Consider the following 583-residue polypeptide: uncharacterized protein (583 aa).

Positions 1-38 are enriched in polar residues; sequence MGQGESIPSRQIQRDASMQAVSSESENINDSDRQNSGF. Disordered regions lie at residues 1–39, 53–124, 156–197, and 362–452; these read MGQG…SGFS, GLRR…AIPQ, TQNN…TAIG, and NSGS…QTDH. Over residues 70–80 the composition is skewed to basic and acidic residues; that stretch reads GNRDRTTERSA. Low complexity predominate over residues 88–102; that stretch reads SLLNRNSPSLRSLSP. Polar residues-rich tracts occupy residues 156 to 165, 172 to 191, 384 to 408, and 420 to 452; these read TQNNQSTLAS, VSSS…NLES, LISS…NENV, and ASTA…QTDH. The segment at 525–568 adopts an RING-type zinc-finger fold; it reads CLVCLSNFELNDECRRLKQCNHFFHRECIDQWLTSSQNSCPLCR. Ser580 carries the post-translational modification Phosphoserine.

It localises to the membrane. This is an uncharacterized protein from Schizosaccharomyces pombe (strain 972 / ATCC 24843) (Fission yeast).